Consider the following 264-residue polypeptide: Small ribosomal subunit protein eS1 (264 aa).

Lys34 is modified (N6-acetyllysine; alternate). A Glycyl lysine isopeptide (Lys-Gly) (interchain with G-Cter in SUMO2); alternate cross-link involves residue Lys34. Lys56 is modified (N6-acetyllysine). The residue at position 155 (Tyr155) is an ADP-ribosyltyrosine. Positions 232–264 (HGEGGSSGKTTGDETGAKVERADGYEPPVQESV) are disordered. Phosphoserine is present on Ser237. The segment covering 242–255 (TGDETGAKVERADG) has biased composition (basic and acidic residues). Lys249 carries the post-translational modification N6-acetyllysine; alternate. Lys249 participates in a covalent cross-link: Glycyl lysine isopeptide (Lys-Gly) (interchain with G-Cter in SUMO2); alternate. A Phosphotyrosine modification is found at Tyr256. A Phosphoserine modification is found at Ser263.

Belongs to the eukaryotic ribosomal protein eS1 family. As to quaternary structure, component of the small ribosomal subunit. Mature ribosomes consist of a small (40S) and a large (60S) subunit. The 40S subunit contains about 33 different proteins and 1 molecule of RNA (18S). The 60S subunit contains about 49 different proteins and 3 molecules of RNA (28S, 5.8S and 5S). Identified in a IGF2BP1-dependent mRNP granule complex containing untranslated mRNAs. Binds with high affinity to IPO4. Interacts with DDIT3. Part of the small subunit (SSU) processome, composed of more than 70 proteins and the RNA chaperone small nucleolar RNA (snoRNA) U3. Post-translationally, the protein designated S3b has the same amino acid sequence as S3a except that it lacks the C-terminal 12 residues. It is probable that S3a is converted by proteolysis, either physiologically or fortuitously, to S3b. ADP-ribosylated at Tyr-155 by PARP1 in presence of HPF1.

The protein resides in the cytoplasm. Its subcellular location is the nucleus. The protein localises to the nucleolus. In terms of biological role, component of the small ribosomal subunit. The ribosome is a large ribonucleoprotein complex responsible for the synthesis of proteins in the cell. Part of the small subunit (SSU) processome, first precursor of the small eukaryotic ribosomal subunit. During the assembly of the SSU processome in the nucleolus, many ribosome biogenesis factors, an RNA chaperone and ribosomal proteins associate with the nascent pre-rRNA and work in concert to generate RNA folding, modifications, rearrangements and cleavage as well as targeted degradation of pre-ribosomal RNA by the RNA exosome. May play a role during erythropoiesis through regulation of transcription factor DDIT3. This is Small ribosomal subunit protein eS1 (Rps3a) from Rattus norvegicus (Rat).